A 493-amino-acid chain; its full sequence is Guanosine-5'-triphosphate,3'-diphosphate pyrophosphatase (493 aa).

This sequence belongs to the GppA/Ppx family. GppA subfamily.

It carries out the reaction guanosine 3'-diphosphate 5'-triphosphate + H2O = guanosine 3',5'-bis(diphosphate) + phosphate + H(+). It participates in purine metabolism; ppGpp biosynthesis; ppGpp from GTP: step 2/2. Its function is as follows. Catalyzes the conversion of pppGpp to ppGpp. Guanosine pentaphosphate (pppGpp) is a cytoplasmic signaling molecule which together with ppGpp controls the 'stringent response', an adaptive process that allows bacteria to respond to amino acid starvation, resulting in the coordinated regulation of numerous cellular activities. The protein is Guanosine-5'-triphosphate,3'-diphosphate pyrophosphatase of Salmonella dublin (strain CT_02021853).